The chain runs to 343 residues: Ornithine carbamoyltransferase (343 aa).

Carbamoyl phosphate contacts are provided by residues 62 to 65 (STRT), Q89, R113, and 140 to 143 (HPTQ). L-ornithine is bound by residues N172, D236, and 240 to 241 (SM). Residues 278-279 (CL) and R323 contribute to the carbamoyl phosphate site.

This sequence belongs to the aspartate/ornithine carbamoyltransferase superfamily. OTCase family.

It is found in the cytoplasm. The catalysed reaction is carbamoyl phosphate + L-ornithine = L-citrulline + phosphate + H(+). The protein operates within amino-acid degradation; L-arginine degradation via ADI pathway; carbamoyl phosphate from L-arginine: step 2/2. Its function is as follows. Reversibly catalyzes the transfer of the carbamoyl group from carbamoyl phosphate (CP) to the N(epsilon) atom of ornithine (ORN) to produce L-citrulline. This chain is Ornithine carbamoyltransferase, found in Levilactobacillus brevis (strain ATCC 367 / BCRC 12310 / CIP 105137 / JCM 1170 / LMG 11437 / NCIMB 947 / NCTC 947) (Lactobacillus brevis).